The following is a 212-amino-acid chain: uncharacterized protein (212 aa).

S-adenosyl-L-methionine contacts are provided by Gly53, Glu74, and Asp97.

Belongs to the methyltransferase superfamily. YrrT family.

Could be a S-adenosyl-L-methionine-dependent methyltransferase. This is an uncharacterized protein from Bacillus thuringiensis (strain Al Hakam).